A 603-amino-acid chain; its full sequence is MSRFARLLLIVALFFTNAWAKTVKETLRITWKEGAPNGQARELIYTNGQFPSPTLVWDEDDDIEGQRPIQPGNKFVYRFKASPPGNHWYHSHEKMSLVDGLYGAIHIRLTGTPRRFHMNDAKSQARRPKGDRTGLWSQISQDKDDIKAMENAAYDPEYLVVSDWSQYTSEEYWKISTDSGLLVLYAYVAPSILVNGKGEVYCPGQKFLQAELAPGLVEDAFPPGTEVSDKGCFPADLDQVQGGPWNITKRPDLIPPRVREGCVASRHENATIVVDPSKNNGWVSMHFVAAATTAQITFSVDSHEFWLYEIDGNYVNPRKFASAVMSAGETFSVMIKLDQEPGKYTMRIPNSGASQVLGGFAEMVYKGCEREEKAGKAYLSYGGNPTSPDVEKNSFFPWQLDTDHMSPWPPNKPRPGNADEEHLLVLGRVGAPYNYTMNTKYLYPVDFQNDDPLLFYPSATRDTENDGLVLRTKNGSWVDLILQVSTLPGDTASSEHFMHKHGSKTWRIGFGTGVWNYTSVEEAIQERPQDFNLETPGLRDTWITAFSIGGEAYWSVFRYFVDNPGPWLFHCHIELHLMGGMGIAILDGVDAWPEHIPEEYQLR.

Residues 1 to 20 form the signal peptide; that stretch reads MSRFARLLLIVALFFTNAWA. Plastocyanin-like domains lie at 66-108 and 159-349; these read QRPI…IHIR and LVVS…MRIP. Residues H90 and H92 each contribute to the Cu cation site. N246, N269, N434, and N474 each carry an N-linked (GlcNAc...) asparagine glycan. The 129-residue stretch at 460-588 folds into the Plastocyanin-like 3 domain; sequence TRDTENDGLV…GGMGIAILDG (129 aa). The Cu cation site is built by H496, H499, and H501. Residue N516 is glycosylated (N-linked (GlcNAc...) asparagine). Cu cation is bound by residues H570, C571, H572, and H576.

This sequence belongs to the multicopper oxidase family. Cu cation is required as a cofactor.

The protein resides in the cell surface. It participates in pigment biosynthesis. In terms of biological role, laccase; part of the Pks1 gene cluster that mediates the biosynthesis of an anthraquinone derivative pigment that contributes to conidial pigmentation that provides protection from UV radiation, heat and cold stress. The polyketide synthase Pks1 produces 1-acetyl-2,4,6,8-tetrahydroxy-9,10-anthraquinone though condensation of acetyl-CoA with malonyl-CoA. The dehydratase EthD and the laccase Mlac1 further convert the anthraquinone derivative into the final conidial pigment. This Metarhizium anisopliae (Entomophthora anisopliae) protein is Laccase 1.